The primary structure comprises 139 residues: Nucleoside diphosphate kinase (139 aa).

The ATP site is built by K11, F59, R87, T93, R104, and N114. H117 serves as the catalytic Pros-phosphohistidine intermediate.

It belongs to the NDK family. Homotetramer. Mg(2+) is required as a cofactor.

Its subcellular location is the cytoplasm. The enzyme catalyses a 2'-deoxyribonucleoside 5'-diphosphate + ATP = a 2'-deoxyribonucleoside 5'-triphosphate + ADP. The catalysed reaction is a ribonucleoside 5'-diphosphate + ATP = a ribonucleoside 5'-triphosphate + ADP. Its function is as follows. Major role in the synthesis of nucleoside triphosphates other than ATP. The ATP gamma phosphate is transferred to the NDP beta phosphate via a ping-pong mechanism, using a phosphorylated active-site intermediate. This is Nucleoside diphosphate kinase from Wolbachia pipientis wMel.